The following is a 323-amino-acid chain: Pseudouridine-5'-phosphate glycosidase (323 aa).

E43 (proton donor) is an active-site residue. Substrate-binding residues include K104 and V124. D156 serves as a coordination point for Mn(2+). 158-160 (SAD) serves as a coordination point for substrate. The Nucleophile role is filled by K177.

Belongs to the pseudouridine-5'-phosphate glycosidase family. As to quaternary structure, homotrimer. The cofactor is Mn(2+).

It catalyses the reaction D-ribose 5-phosphate + uracil = psi-UMP + H2O. Its function is as follows. Catalyzes the reversible cleavage of pseudouridine 5'-phosphate (PsiMP) to ribose 5-phosphate and uracil. Functions biologically in the cleavage direction, as part of a pseudouridine degradation pathway. The sequence is that of Pseudouridine-5'-phosphate glycosidase from Streptomyces griseus subsp. griseus (strain JCM 4626 / CBS 651.72 / NBRC 13350 / KCC S-0626 / ISP 5235).